A 428-amino-acid polypeptide reads, in one-letter code: Histidinol dehydrogenase (428 aa).

The NAD(+) site is built by Tyr-124, Gln-186, and Asn-209. Substrate is bound by residues Ser-233, Gln-255, and His-258. Zn(2+)-binding residues include Gln-255 and His-258. Active-site proton acceptor residues include Glu-322 and His-323. Residues His-323, Asp-356, Glu-410, and His-415 each coordinate substrate. Asp-356 provides a ligand contact to Zn(2+). Residue His-415 participates in Zn(2+) binding.

It belongs to the histidinol dehydrogenase family. Zn(2+) is required as a cofactor.

It carries out the reaction L-histidinol + 2 NAD(+) + H2O = L-histidine + 2 NADH + 3 H(+). The protein operates within amino-acid biosynthesis; L-histidine biosynthesis; L-histidine from 5-phospho-alpha-D-ribose 1-diphosphate: step 9/9. Its function is as follows. Catalyzes the sequential NAD-dependent oxidations of L-histidinol to L-histidinaldehyde and then to L-histidine. The sequence is that of Histidinol dehydrogenase from Bacteroides fragilis (strain YCH46).